A 334-amino-acid chain; its full sequence is Glucan endo-1,3-beta-glucosidase GII (334 aa).

An N-terminal signal peptide occupies residues 1-28; that stretch reads MARKDVASMFAAALFIGAFAAVPTSVQS. Residue Glu122 is the Proton donor of the active site. Glu259 acts as the Nucleophile in catalysis.

This sequence belongs to the glycosyl hydrolase 17 family.

It carries out the reaction Hydrolysis of (1-&gt;3)-beta-D-glucosidic linkages in (1-&gt;3)-beta-D-glucans.. May provide a degree of protection against microbial invasion of germinated barley grain through its ability to degrade fungal cell wall polysaccharides. Hydrolyzes laminarin in vitro. This Hordeum vulgare (Barley) protein is Glucan endo-1,3-beta-glucosidase GII.